Here is a 365-residue protein sequence, read N- to C-terminus: Histidinol-phosphate aminotransferase 2 (365 aa).

Position 226 is an N6-(pyridoxal phosphate)lysine (K226).

This sequence belongs to the class-II pyridoxal-phosphate-dependent aminotransferase family. Histidinol-phosphate aminotransferase subfamily. In terms of assembly, homodimer. Requires pyridoxal 5'-phosphate as cofactor.

The enzyme catalyses L-histidinol phosphate + 2-oxoglutarate = 3-(imidazol-4-yl)-2-oxopropyl phosphate + L-glutamate. It participates in amino-acid biosynthesis; L-histidine biosynthesis; L-histidine from 5-phospho-alpha-D-ribose 1-diphosphate: step 7/9. This Pasteurella multocida (strain Pm70) protein is Histidinol-phosphate aminotransferase 2 (hisC2).